A 501-amino-acid chain; its full sequence is Aspartyl/glutamyl-tRNA(Asn/Gln) amidotransferase subunit B (501 aa).

Residues 276–299 (HYQEADGSTSKGRPKETAEDYRYF) are disordered. The segment covering 288–299 (RPKETAEDYRYF) has biased composition (basic and acidic residues).

The protein belongs to the GatB/GatE family. GatB subfamily. Heterotrimer of A, B and C subunits.

It catalyses the reaction L-glutamyl-tRNA(Gln) + L-glutamine + ATP + H2O = L-glutaminyl-tRNA(Gln) + L-glutamate + ADP + phosphate + H(+). The enzyme catalyses L-aspartyl-tRNA(Asn) + L-glutamine + ATP + H2O = L-asparaginyl-tRNA(Asn) + L-glutamate + ADP + phosphate + 2 H(+). Its function is as follows. Allows the formation of correctly charged Asn-tRNA(Asn) or Gln-tRNA(Gln) through the transamidation of misacylated Asp-tRNA(Asn) or Glu-tRNA(Gln) in organisms which lack either or both of asparaginyl-tRNA or glutaminyl-tRNA synthetases. The reaction takes place in the presence of glutamine and ATP through an activated phospho-Asp-tRNA(Asn) or phospho-Glu-tRNA(Gln). The chain is Aspartyl/glutamyl-tRNA(Asn/Gln) amidotransferase subunit B from Corynebacterium glutamicum (strain R).